Consider the following 453-residue polypeptide: Ribosomal protein uS12 methylthiotransferase RimO (453 aa).

Residues 5–120 (PKVGFVSLGC…VMQAVHSHLP (116 aa)) enclose the MTTase N-terminal domain. Residues Cys14, Cys50, Cys79, Cys151, Cys155, and Cys158 each coordinate [4Fe-4S] cluster. The 246-residue stretch at 137 to 382 (LTPRHYAYLK…MEVAEEVSAR (246 aa)) folds into the Radical SAM core domain. A TRAM domain is found at 385–453 (ARKVGKTLKV…ADGHDLWGEV (69 aa)).

This sequence belongs to the methylthiotransferase family. RimO subfamily. The cofactor is [4Fe-4S] cluster.

The protein resides in the cytoplasm. It catalyses the reaction L-aspartate(89)-[ribosomal protein uS12]-hydrogen + (sulfur carrier)-SH + AH2 + 2 S-adenosyl-L-methionine = 3-methylsulfanyl-L-aspartate(89)-[ribosomal protein uS12]-hydrogen + (sulfur carrier)-H + 5'-deoxyadenosine + L-methionine + A + S-adenosyl-L-homocysteine + 2 H(+). In terms of biological role, catalyzes the methylthiolation of an aspartic acid residue of ribosomal protein uS12. In Burkholderia multivorans (strain ATCC 17616 / 249), this protein is Ribosomal protein uS12 methylthiotransferase RimO.